The primary structure comprises 159 residues: MTLEEVRGQDTVPESTARMQGAGKALHELLLSAQRQGCLTAGVYESAKVLNVDPDNVTFCVLAADEEDEGDIALQIHFTLIQAFCCENDIDIVRVGDVQRLAAIVGADDEGGAPGDLHCILISNPNEDTWKDPALEKLSLFCEESRSFNDWVPSITLPE.

Residues 43–86 (VYESAKVLNVDPDNVTFCVLAADEEDEGDIALQIHFTLIQAFCC) form a homodimerization region.

It belongs to the GADD45 family. In terms of assembly, undergoes concentration-dependent homodimerization, which is required for growth inhibititory activity and enhances interaction with PCNA. Interacts with GADD45GIP1. Interacts with PCNA.

Involved in the regulation of growth and apoptosis. Mediates activation of stress-responsive MTK1/MEKK4 MAPKKK. The sequence is that of Growth arrest and DNA damage-inducible protein GADD45 gamma (Gadd45g) from Rattus norvegicus (Rat).